A 434-amino-acid chain; its full sequence is Glycerol-3-phosphate acyltransferase 3 (434 aa).

A helical membrane pass occupies residues 14–34 (WLTLVLGFILLPSVFGVSLGI). Serine 68 and serine 77 each carry phosphoserine. 2 helical membrane-spanning segments follow: residues 137–157 (ISLR…CVLL) and 161–181 (VTLA…VGQL). The HXXXXD motif motif lies at 229-234 (HTSPID).

The protein belongs to the 1-acyl-sn-glycerol-3-phosphate acyltransferase family. As to expression, widely expressed. Expressed in liver, kidney, testis, brain, heart, skeletal muscle, thyroid, prostate, thymus and placenta. Also expressed lung and adipose tissue.

Its subcellular location is the endoplasmic reticulum membrane. It carries out the reaction sn-glycerol 3-phosphate + an acyl-CoA = a 1-acyl-sn-glycero-3-phosphate + CoA. The enzyme catalyses a 1-acyl-sn-glycero-3-phosphate + an acyl-CoA = a 1,2-diacyl-sn-glycero-3-phosphate + CoA. The catalysed reaction is dodecanoyl-CoA + sn-glycerol 3-phosphate = 1-dodecanoyl-sn-glycerol 3-phosphate + CoA. It catalyses the reaction sn-glycerol 3-phosphate + hexadecanoyl-CoA = 1-hexadecanoyl-sn-glycero-3-phosphate + CoA. It carries out the reaction sn-glycerol 3-phosphate + (9Z)-octadecenoyl-CoA = 1-(9Z-octadecenoyl)-sn-glycero-3-phosphate + CoA. The enzyme catalyses (9Z,12Z)-octadecadienoyl-CoA + sn-glycerol 3-phosphate = 1-(9Z,12Z)-octadecadienoyl-sn-glycero-3-phosphate + CoA. The catalysed reaction is 1-tetradecanoyl-sn-glycerol 3-phosphate + (9Z)-octadecenoyl-CoA = 1-tetradecanoyl-2-(9Z)-octadecenoyl-sn-glycero-3-phosphate + CoA. It catalyses the reaction 1-hexadecanoyl-sn-glycero-3-phosphate + (9Z)-octadecenoyl-CoA = 1-hexadecanoyl-2-(9Z-octadecenoyl)-sn-glycero-3-phosphate + CoA. It carries out the reaction 1-(9Z-octadecenoyl)-sn-glycero-3-phosphate + (9Z)-octadecenoyl-CoA = 1,2-di-(9Z-octadecenoyl)-sn-glycero-3-phosphate + CoA. The enzyme catalyses 1-(6Z,9Z,12Z-octadecatrienoyl)-sn-glycero-3-phosphate + (9Z)-octadecenoyl-CoA = (6Z,9Z,12Z)-octadecatrienoyl-2-(9Z)-octadecenoyl-sn-glycero-3-phosphate + CoA. The catalysed reaction is 1-(9Z,12Z,15Z)-octadecatrienoyl-sn-glycero-3-phosphate + (9Z)-octadecenoyl-CoA = 1-(9Z,12Z,15Z)-octadecatrienoyl-2-(9Z)-octadecenoyl-sn-glycero-3-phosphate + CoA. It catalyses the reaction 1-(9Z-octadecenoyl)-sn-glycero-3-phosphate + tetradecanoyl-CoA = 1-(9Z)-octadecenoyl-2-tetradecanoyl-sn-glycero-3-phosphate + CoA. It carries out the reaction 1-(9Z-octadecenoyl)-sn-glycero-3-phosphate + hexadecanoyl-CoA = 1-(9Z)-octadecenoyl-2-hexadecanoyl-sn-glycero-3-phosphate + CoA. The enzyme catalyses 1-(9Z-octadecenoyl)-sn-glycero-3-phosphate + octadecanoyl-CoA = 1-(9Z-octadecenoyl)-2-octadecanoyl-sn-glycero-3-phosphate + CoA. The catalysed reaction is 1-(9Z-octadecenoyl)-sn-glycero-3-phosphate + (9Z,12Z)-octadecadienoyl-CoA = 1-(9Z)-octadecenoyl-2-(9Z,12Z)-octadecadienoyl-sn-glycero-3-phosphate + CoA. It catalyses the reaction 1-(5Z,8Z,11Z,14Z-eicosatetraenoyl)-sn-glycero-3-phosphate + (9Z)-octadecenoyl-CoA = 1-(5Z,8Z,11Z,14Z)-eicosatetraenoyl-2-(9Z)-octadecenoyl-sn-glycero-3-phosphate + CoA. Its pathway is glycerolipid metabolism; triacylglycerol biosynthesis. It functions in the pathway phospholipid metabolism; CDP-diacylglycerol biosynthesis; CDP-diacylglycerol from sn-glycerol 3-phosphate: step 1/3. With respect to regulation, inhibited by N-ethylmaleimide (NEM). In terms of biological role, converts glycerol-3-phosphate to 1-acyl-sn-glycerol-3-phosphate (lysophosphatidic acid or LPA) by incorporating an acyl moiety at the sn-1 position of the glycerol backbone. Also converts LPA into 1,2-diacyl-sn-glycerol-3-phosphate (phosphatidic acid or PA) by incorporating an acyl moiety at the sn-2 position of the glycerol backbone. Protects cells against lipotoxicity. In Homo sapiens (Human), this protein is Glycerol-3-phosphate acyltransferase 3.